The sequence spans 429 residues: uncharacterized protein (429 aa).

Residues 1–12 (MSDSKEDIRNGQ) are compositionally biased toward basic and acidic residues. Disordered regions lie at residues 1–63 (MSDS…APEA), 257–306 (RSRA…SDRM), and 320–429 (YRGY…SDSE). Positions 328–362 (EENEEDDLGDFIAEEEEEEEQEEEQEEDEEDEEEV) are enriched in acidic residues. Residues 369-378 (KGFDADKEAS) are compositionally biased toward basic and acidic residues.

This sequence belongs to the LEO1 family.

The protein localises to the nucleus. This is an uncharacterized protein from Schizosaccharomyces pombe (strain 972 / ATCC 24843) (Fission yeast).